The chain runs to 218 residues: Cytochrome c biogenesis ATP-binding export protein CcmA (218 aa).

An ABC transporter domain is found at 12 to 217 (LHAEQLSSIR…KLSLEYRGEV (206 aa)). 44-51 (GPNGAGKS) is a binding site for ATP.

It belongs to the ABC transporter superfamily. CcmA exporter (TC 3.A.1.107) family. As to quaternary structure, the complex is composed of two ATP-binding proteins (CcmA) and two transmembrane proteins (CcmB).

It is found in the cell inner membrane. The catalysed reaction is heme b(in) + ATP + H2O = heme b(out) + ADP + phosphate + H(+). Its function is as follows. Part of the ABC transporter complex CcmAB involved in the biogenesis of c-type cytochromes; once thought to export heme, this seems not to be the case, but its exact role is uncertain. Responsible for energy coupling to the transport system. The sequence is that of Cytochrome c biogenesis ATP-binding export protein CcmA from Idiomarina loihiensis (strain ATCC BAA-735 / DSM 15497 / L2-TR).